A 135-amino-acid polypeptide reads, in one-letter code: Basic phospholipase A2 KBf-VA (135 aa).

Cystine bridges form between Cys28-Cys87, Cys42-Cys134, Cys44-Cys60, Cys59-Cys115, Cys66-Cys108, Cys76-Cys101, and Cys94-Cys106. Residues Tyr43, Gly45, and Gly47 each contribute to the Ca(2+) site. His63 is an active-site residue. Residue Asp64 coordinates Ca(2+). Asp109 is a catalytic residue.

Belongs to the phospholipase A2 family. Group I subfamily. D49 sub-subfamily. Ca(2+) serves as cofactor. As to expression, expressed by the venom gland.

The protein resides in the secreted. The catalysed reaction is a 1,2-diacyl-sn-glycero-3-phosphocholine + H2O = a 1-acyl-sn-glycero-3-phosphocholine + a fatty acid + H(+). Functionally, snake venom phospholipase A2 (PLA2) that inhibits neuromuscular transmission by blocking acetylcholine release from the nerve termini. PLA2 catalyzes the calcium-dependent hydrolysis of the 2-acyl groups in 3-sn-phosphoglycerides. This chain is Basic phospholipase A2 KBf-VA, found in Bungarus fasciatus (Banded krait).